A 329-amino-acid chain; its full sequence is AUGMIN subunit 7 (329 aa).

The stretch at 169–197 forms a coiled coil; the sequence is DVSELETKLSEQAKILSNLQQKVDDLAAK.

In terms of assembly, part of the augmin complex composed of 8 subunits. The complex acts on microtubules and interacts with gamma-tubulin in spindles and the phragmoplast.

Its subcellular location is the cytoplasm. The protein localises to the cytoskeleton. It localises to the spindle. It is found in the phragmoplast. In terms of biological role, contributes to the assembly of the acentrosomal spindle and phragmoplast microtubule arrays as part of the augmin complex. Regulates the association of gamma-tubulin with the spindle and phragmoplast microtubules. In Arabidopsis thaliana (Mouse-ear cress), this protein is AUGMIN subunit 7.